A 312-amino-acid polypeptide reads, in one-letter code: MEEKPSGPIPDMLATAEPSSSETDKEVLSPAVPAAAPSSSMSEEPGPEQAATPPVWERGGAGGMQQGSSPAPDSCQPGPGPSPGLTSIVSGTSEDLRPPRRRPPPGKQIPCSSPGCCLSFPSVRDLAQHLRTHCPPTQSLEGKLFRCSALSCTETFPSMQELVAHSKLHYKPNRYFKCENCLLRFRTHRSLFKHLHVCAEHAQSPAPPPPPALDREPPAPERPPEVDPASAPGLPFPLLEPFTTPAPAPTGPFLPYLNPAPFGLSPPRLRPFLAAAPGPPASSAAVWKKSQGAGSSPRRPQGGSDAPSGACR.

Positions 1–110 (MEEKPSGPIP…RRPPPGKQIP (110 aa)) are disordered. Residues 29-48 (SPAVPAAAPSSSMSEEPGPE) are compositionally biased toward low complexity. Polar residues predominate over residues 84 to 93 (GLTSIVSGTS). 3 C2H2-type zinc fingers span residues 109–133 (IPCS…LRTH), 145–169 (FRCS…SKLH), and 176–201 (FKCE…CAEH). The disordered stretch occupies residues 203–312 (QSPAPPPPPA…GSDAPSGACR (110 aa)). Over residues 213 to 225 (LDREPPAPERPPE) the composition is skewed to basic and acidic residues. Low complexity-rich tracts occupy residues 227–243 (DPAS…EPFT) and 265–285 (SPPR…SSAA).

The protein belongs to the krueppel C2H2-type zinc-finger protein family.

Its subcellular location is the nucleus. Functionally, may be involved in transcriptional regulation. The protein is Zinc finger protein 414 (ZNF414) of Homo sapiens (Human).